The following is a 281-amino-acid chain: 2-dehydro-3-deoxyphosphooctonate aldolase (281 aa).

The protein belongs to the KdsA family.

The protein resides in the cytoplasm. The enzyme catalyses D-arabinose 5-phosphate + phosphoenolpyruvate + H2O = 3-deoxy-alpha-D-manno-2-octulosonate-8-phosphate + phosphate. It participates in carbohydrate biosynthesis; 3-deoxy-D-manno-octulosonate biosynthesis; 3-deoxy-D-manno-octulosonate from D-ribulose 5-phosphate: step 2/3. It functions in the pathway bacterial outer membrane biogenesis; lipopolysaccharide biosynthesis. This is 2-dehydro-3-deoxyphosphooctonate aldolase from Acidithiobacillus ferrooxidans (strain ATCC 23270 / DSM 14882 / CIP 104768 / NCIMB 8455) (Ferrobacillus ferrooxidans (strain ATCC 23270)).